Consider the following 240-residue polypeptide: 4-hydroxy-tetrahydrodipicolinate reductase (240 aa).

NAD(+) is bound at residue 7 to 12 (GLSGTM). Position 35 (K35) interacts with NADP(+). NAD(+) is bound by residues 74–76 (GTT) and 98–101 (ATNM). The Proton donor/acceptor role is filled by H131. H132 contacts (S)-2,3,4,5-tetrahydrodipicolinate. The active-site Proton donor is K135. Residue 141–142 (GS) coordinates (S)-2,3,4,5-tetrahydrodipicolinate.

Belongs to the DapB family.

It localises to the cytoplasm. It carries out the reaction (S)-2,3,4,5-tetrahydrodipicolinate + NAD(+) + H2O = (2S,4S)-4-hydroxy-2,3,4,5-tetrahydrodipicolinate + NADH + H(+). The enzyme catalyses (S)-2,3,4,5-tetrahydrodipicolinate + NADP(+) + H2O = (2S,4S)-4-hydroxy-2,3,4,5-tetrahydrodipicolinate + NADPH + H(+). The protein operates within amino-acid biosynthesis; L-lysine biosynthesis via DAP pathway; (S)-tetrahydrodipicolinate from L-aspartate: step 4/4. Its function is as follows. Catalyzes the conversion of 4-hydroxy-tetrahydrodipicolinate (HTPA) to tetrahydrodipicolinate. The sequence is that of 4-hydroxy-tetrahydrodipicolinate reductase from Alkaliphilus metalliredigens (strain QYMF).